The primary structure comprises 183 residues: Capsid protein (183 aa).

The disordered stretch occupies residues 136–183 (NAPILSTLPETTVVRRRGRSPRRRTPSPRRRRSQSPRRRRSQSRESQC). Over residues 149 to 176 (VRRRGRSPRRRTPSPRRRRSQSPRRRRS) the composition is skewed to basic residues. Phosphoserine; by host occurs at positions 155, 162, and 170. The stretch at 155–161 (SPRRRTP) is one 1; half-length repeat. Positions 155–177 (SPRRRTPSPRRRRSQSPRRRRSQ) are 3 X 8 AA repeats of S-P-R-R-R-[PR]-S-Q. Residues 158 to 175 (RRTPSPRRRRSQSPRRRR) carry the Bipartite nuclear localization signal motif. A run of 2 repeats spans residues 162 to 169 (SPRRRRSQ) and 170 to 177 (SPRRRRSQ). The interval 177 to 183 (QSRESQC) is RNA binding.

Belongs to the orthohepadnavirus core antigen family. As to quaternary structure, homodimerizes, then multimerizes. Interacts with cytosol exposed regions of viral L glycoprotein present in the reticulum-to-Golgi compartment. Interacts with human FLNB. Phosphorylated form interacts with host importin alpha; this interaction depends on the exposure of the NLS, which itself depends upon genome maturation and/or phosphorylation of the capsid protein. Interacts with host NUP153. Phosphorylated by host SRPK1, SRPK2, and maybe protein kinase C or GAPDH. Phosphorylation is critical for pregenomic RNA packaging. Protein kinase C phosphorylation is stimulated by HBx protein and may play a role in transport of the viral genome to the nucleus at the late step during the viral replication cycle.

It is found in the virion. The protein resides in the host cytoplasm. Its function is as follows. Self assembles to form an icosahedral capsid. Most capsids appear to be large particles with an icosahedral symmetry of T=4 and consist of 240 copies of capsid protein, though a fraction forms smaller T=3 particles consisting of 180 capsid proteins. Entering capsids are transported along microtubules to the nucleus. Phosphorylation of the capsid is thought to induce exposure of nuclear localization signal in the C-terminal portion of the capsid protein that allows binding to the nuclear pore complex via the importin (karyopherin-) alpha and beta. Capsids are imported in intact form through the nuclear pore into the nuclear basket, where it probably binds NUP153. Only capsids that contain the mature viral genome can release the viral DNA and capsid protein into the nucleoplasm. Immature capsids get stuck in the basket. Capsids encapsulate the pre-genomic RNA and the P protein. Pre-genomic RNA is reverse-transcribed into DNA while the capsid is still in the cytoplasm. The capsid can then either be directed to the nucleus, providing more genomes for transcription, or bud through the endoplasmic reticulum to provide new virions. The sequence is that of Capsid protein from Hepatitis B virus genotype B/C subtype adw (isolate Okinawa/pODW282/1998) (HBV-B).